A 169-amino-acid polypeptide reads, in one-letter code: Peptide deformylase (169 aa).

Fe cation is bound by residues C91 and H133. The active site involves E134. H137 contributes to the Fe cation binding site.

This sequence belongs to the polypeptide deformylase family. Requires Fe(2+) as cofactor.

The enzyme catalyses N-terminal N-formyl-L-methionyl-[peptide] + H2O = N-terminal L-methionyl-[peptide] + formate. In terms of biological role, removes the formyl group from the N-terminal Met of newly synthesized proteins. Requires at least a dipeptide for an efficient rate of reaction. N-terminal L-methionine is a prerequisite for activity but the enzyme has broad specificity at other positions. The protein is Peptide deformylase of Shigella boydii serotype 18 (strain CDC 3083-94 / BS512).